The primary structure comprises 336 residues: Holliday junction branch migration complex subunit RuvB (336 aa).

The tract at residues 4–184 (ADRIISAIAK…FGIVQRLEFY (181 aa)) is large ATPase domain (RuvB-L). ATP contacts are provided by residues Ile23, Arg24, Gly65, Lys68, Thr69, Thr70, 131–133 (EDY), Arg174, Tyr184, and Arg221. Thr69 provides a ligand contact to Mg(2+). The tract at residues 185-255 (SIEDLTSIVM…IAKAALAMLD (71 aa)) is small ATPAse domain (RuvB-S). The segment at 258–336 (QAGFDYLDRK…HFGLAKLADK (79 aa)) is head domain (RuvB-H). DNA-binding residues include Arg294, Arg313, and Arg318.

This sequence belongs to the RuvB family. As to quaternary structure, homohexamer. Forms an RuvA(8)-RuvB(12)-Holliday junction (HJ) complex. HJ DNA is sandwiched between 2 RuvA tetramers; dsDNA enters through RuvA and exits via RuvB. An RuvB hexamer assembles on each DNA strand where it exits the tetramer. Each RuvB hexamer is contacted by two RuvA subunits (via domain III) on 2 adjacent RuvB subunits; this complex drives branch migration. In the full resolvosome a probable DNA-RuvA(4)-RuvB(12)-RuvC(2) complex forms which resolves the HJ.

It is found in the cytoplasm. It carries out the reaction ATP + H2O = ADP + phosphate + H(+). The RuvA-RuvB-RuvC complex processes Holliday junction (HJ) DNA during genetic recombination and DNA repair, while the RuvA-RuvB complex plays an important role in the rescue of blocked DNA replication forks via replication fork reversal (RFR). RuvA specifically binds to HJ cruciform DNA, conferring on it an open structure. The RuvB hexamer acts as an ATP-dependent pump, pulling dsDNA into and through the RuvAB complex. RuvB forms 2 homohexamers on either side of HJ DNA bound by 1 or 2 RuvA tetramers; 4 subunits per hexamer contact DNA at a time. Coordinated motions by a converter formed by DNA-disengaged RuvB subunits stimulates ATP hydrolysis and nucleotide exchange. Immobilization of the converter enables RuvB to convert the ATP-contained energy into a lever motion, pulling 2 nucleotides of DNA out of the RuvA tetramer per ATP hydrolyzed, thus driving DNA branch migration. The RuvB motors rotate together with the DNA substrate, which together with the progressing nucleotide cycle form the mechanistic basis for DNA recombination by continuous HJ branch migration. Branch migration allows RuvC to scan DNA until it finds its consensus sequence, where it cleaves and resolves cruciform DNA. This is Holliday junction branch migration complex subunit RuvB from Actinobacillus succinogenes (strain ATCC 55618 / DSM 22257 / CCUG 43843 / 130Z).